A 393-amino-acid polypeptide reads, in one-letter code: NAD(P)H-quinone oxidoreductase subunit H, chloroplastic (393 aa).

This sequence belongs to the complex I 49 kDa subunit family. NDH is composed of at least 16 different subunits, 5 of which are encoded in the nucleus.

The protein resides in the plastid. It localises to the chloroplast thylakoid membrane. It carries out the reaction a plastoquinone + NADH + (n+1) H(+)(in) = a plastoquinol + NAD(+) + n H(+)(out). The enzyme catalyses a plastoquinone + NADPH + (n+1) H(+)(in) = a plastoquinol + NADP(+) + n H(+)(out). NDH shuttles electrons from NAD(P)H:plastoquinone, via FMN and iron-sulfur (Fe-S) centers, to quinones in the photosynthetic chain and possibly in a chloroplast respiratory chain. The immediate electron acceptor for the enzyme in this species is believed to be plastoquinone. Couples the redox reaction to proton translocation, and thus conserves the redox energy in a proton gradient. This is NAD(P)H-quinone oxidoreductase subunit H, chloroplastic from Lotus japonicus (Lotus corniculatus var. japonicus).